The chain runs to 90 residues: Probable Fe(2+)-trafficking protein (90 aa).

Belongs to the Fe(2+)-trafficking protein family. Monomer.

Could be a mediator in iron transactions between iron acquisition and iron-requiring processes, such as synthesis and/or repair of Fe-S clusters in biosynthetic enzymes. The sequence is that of Probable Fe(2+)-trafficking protein from Yersinia pestis bv. Antiqua (strain Antiqua).